Reading from the N-terminus, the 301-residue chain is Ribosomal protein L11 methyltransferase (301 aa).

S-adenosyl-L-methionine-binding residues include threonine 146, glycine 167, aspartate 189, and asparagine 234.

This sequence belongs to the methyltransferase superfamily. PrmA family.

It localises to the cytoplasm. The enzyme catalyses L-lysyl-[protein] + 3 S-adenosyl-L-methionine = N(6),N(6),N(6)-trimethyl-L-lysyl-[protein] + 3 S-adenosyl-L-homocysteine + 3 H(+). In terms of biological role, methylates ribosomal protein L11. This Acinetobacter baumannii (strain AB307-0294) protein is Ribosomal protein L11 methyltransferase.